A 659-amino-acid chain; its full sequence is MVNSKGEITDSDPGSNHLLLNGLPDKAGKNQDTEPENSLCSQYEEKVRPCIDLIDSLRALGVEQDLALPAIAVIGDQSSGKSSVLEALSGVALPRGSGIVTRCPLVLKLKKLLNEDEWRGKVSYQDFEMEISDPSEVEVEISKAQNVIAGEGQGISHELISLEVSSPHVPDLTLIDLPGITRVAVGNQPADIGRQTKQLIRKYILKQETINLVVVPCNVDIATTEALSMAQEVDPSGDRTIGILTKPDLVDRGTESKVVDVAQNLVCHLKKGYMIVKCRGQQDIQDQVTLTEALQKERDFFEDHPHFRVLLEEGRATVPCLADKLTSELITHICKTLPLLENQIKENHEKITEELKKYGSDVPEEEHEKMFFLIEKINAFNHDINSLIEGEEFVGEDESRLFTKIRNEFHKWSCVIEKKFQQGYKAIYKQIEKFENRYRGRELPGFVNYKTFEIIIKQQIKELEEPAVYMLHMVTDMVQAAFTDISEANFAEFFNLYRTTKSKIEDIKFELEKEAEKSIRLHFQMEQIVYCQDQVYQRALQRVREKVADEEKNKKINSMSSEEVSSVNISLSEIFEHLLAYRQEATNRISSHIPLIIQYFILQAYGQKLQKGMLQLLQDKDTYNWLLKERSDTSDKRKFLKERLSRLAQARRRLAKFPG.

Met-1 is modified (N-acetylmethionine). Residues 1–40 (MVNSKGEITDSDPGSNHLLLNGLPDKAGKNQDTEPENSLC) form a disordered region. The 274-residue stretch at 65-338 (DLALPAIAVI…LITHICKTLP (274 aa)) folds into the Dynamin-type G domain. Positions 75–82 (GDQSSGKS) are G1 motif. 75–82 (GDQSSGKS) lines the GTP pocket. A G2 motif region spans residues 100–102 (VTR). The tract at residues 176–179 (DLPG) is G3 motif. Residues 176–180 (DLPGI) and 245–248 (TKPD) contribute to the GTP site. The G4 motif stretch occupies residues 245 to 248 (TKPD). The tract at residues 277 to 280 (KCRG) is G5 motif. The bundle signaling element (BSE) stretch occupies residues 339 to 364 (LLENQIKENHEKITEELKKYGSDVPE). The segment at 364-531 (EEEHEKMFFL…HFQMEQIVYC (168 aa)) is middle domain. Residues 365–629 (EEHEKMFFLI…KDTYNWLLKE (265 aa)) are stalk. Residues 552-555 (KNKK) form a critical for lipid-binding region. The region spanning 571–659 (LSEIFEHLLA…ARRRLAKFPG (89 aa)) is the GED domain.

This sequence belongs to the TRAFAC class dynamin-like GTPase superfamily. Dynamin/Fzo/YdjA family. As to quaternary structure, homooligomer. Oligomerizes into multimeric filamentous or ring-like structures by virtue of its stalk domain. Oligomerization is critical for GTPase activity, protein stability, and recognition of viral target structures. Interacts with TRPC1, TRPC3, TRPC4, TRPC5, TRPC6 and TRPC7. Interacts with HSPA5. Interacts with TUBB/TUBB5. Interacts with DDX39A and DDX39B. Post-translationally, ISGylated.

It localises to the cytoplasm. The protein localises to the endoplasmic reticulum membrane. It is found in the perinuclear region. Its function is as follows. Interferon-induced dynamin-like GTPase with antiviral activity. The sequence is that of Interferon-induced GTP-binding protein Mx1 (MX1) from Phoca vitulina (Harbor seal).